The primary structure comprises 394 residues: Phosphopentomutase (394 aa).

Mn(2+) is bound by residues Asp14, Asp287, His292, Asp328, His329, and His340.

The protein belongs to the phosphopentomutase family. Mn(2+) is required as a cofactor.

It is found in the cytoplasm. It catalyses the reaction 2-deoxy-alpha-D-ribose 1-phosphate = 2-deoxy-D-ribose 5-phosphate. The catalysed reaction is alpha-D-ribose 1-phosphate = D-ribose 5-phosphate. It participates in carbohydrate degradation; 2-deoxy-D-ribose 1-phosphate degradation; D-glyceraldehyde 3-phosphate and acetaldehyde from 2-deoxy-alpha-D-ribose 1-phosphate: step 1/2. Functionally, isomerase that catalyzes the conversion of deoxy-ribose 1-phosphate (dRib-1-P) and ribose 1-phosphate (Rib-1-P) to deoxy-ribose 5-phosphate (dRib-5-P) and ribose 5-phosphate (Rib-5-P), respectively. The protein is Phosphopentomutase of Listeria welshimeri serovar 6b (strain ATCC 35897 / DSM 20650 / CCUG 15529 / CIP 8149 / NCTC 11857 / SLCC 5334 / V8).